Reading from the N-terminus, the 118-residue chain is Large ribosomal subunit protein uL18 (118 aa).

Belongs to the universal ribosomal protein uL18 family. In terms of assembly, part of the 50S ribosomal subunit; part of the 5S rRNA/L5/L18/L25 subcomplex. Contacts the 5S and 23S rRNAs.

Functionally, this is one of the proteins that bind and probably mediate the attachment of the 5S RNA into the large ribosomal subunit, where it forms part of the central protuberance. This is Large ribosomal subunit protein uL18 from Rhizorhabdus wittichii (strain DSM 6014 / CCUG 31198 / JCM 15750 / NBRC 105917 / EY 4224 / RW1) (Sphingomonas wittichii).